A 527-amino-acid chain; its full sequence is Importin subunit alpha (527 aa).

Residues 1–58 (MSLRPNSRTEARRSRYKVAVDAEEGRRRREDNMVEIRKNKREENLLKKRREGLLQAQQ) form the IBB domain. 8 ARM repeats span residues 109-151 (IEEV…TSEN), 152-196 (TKVV…YRDL), 197-234 (VLGH…RGKP), 235-279 (QPLF…DKIQ), 280-319 (AVIE…DDIQ), 320-362 (TQVM…NRNQ), 363-403 (IQIV…GGNH), and 404-445 (DQIK…KIGE).

It belongs to the importin alpha family. As to quaternary structure, forms a complex with importin subunit beta-1.

It is found in the cytoplasm. Functionally, binds specifically and directly to substrates containing either a simple or bipartite NLS motif. Promotes docking of import substrates to the nuclear envelope. Seems to act as a cytosolic receptor for both simple and bipartite NLS motifs. The sequence is that of Importin subunit alpha from Solanum lycopersicum (Tomato).